We begin with the raw amino-acid sequence, 356 residues long: MNVGIFSRWNATCGVSLHAEMIGRELLRRGYPITVFAPYLESASRWWHHKLIRPDEEYVVRCYEELSPDGKEGKIDIEKVLEREIDFLIVESYEKLPYKDVEKLVKILKDKGIPSIAIIHEGDYEDIRYTDMNIFEKVCVFDERYVKEVLKDRVSEEKVEIIPYPCYPVREGSREFAEDGVIKFFSFGRQPKEEYCPYIEGLKVFKRDFPNVKYRIVRAMEPLKIFEDFVEQEERILDYEEIVKELHSADFHLLPKGNTKRVVVSSTLYQVLGTLTLTVVPDNRFFETLPHGEEAPVIFYRDVLELVKELKKASADEEYRKKIRENASKFVEENSVERITDRFENLINSILVKNVH.

It belongs to the MDIP synthase family. It depends on Mg(2+) as a cofactor.

The enzyme catalyses bis(myo-inositol) 1,3'-phosphate + GDP-alpha-D-mannose = 2-O-(beta-D-mannosyl)-bis(myo-inositol) 1,3'-phosphate + GDP + H(+). It catalyses the reaction 2-O-(beta-D-mannosyl)-bis(myo-inositol) 1,3'-phosphate + GDP-alpha-D-mannose = 2-O-(beta-D-mannosyl-(1-&gt;2)-beta-D-mannosyl)-bis(myo-inositol) 1,3'-phosphate + GDP + H(+). It carries out the reaction bis(myo-inositol) 1,3'-phosphate + 2 GDP-alpha-D-mannose = 2-O-(beta-D-mannosyl-(1-&gt;2)-beta-D-mannosyl)-bis(myo-inositol) 1,3'-phosphate + 2 GDP + 2 H(+). Catalyzes the transfer of the mannosyl group from GDP-mannose to di-myo-inositol-1,3'-phosphate (DIP), producing mannosyl-di-myo-inositol phosphate (MDIP). Can also use MDIP as an acceptor of a second mannose residue, yielding di-mannosyl-di-myo-inositol phosphate (MMDIP). In Aquifex aeolicus (strain VF5), this protein is GDP-mannose:di-myo-inositol-1,3'-phosphate beta-1,2-mannosyltransferase.